A 194-amino-acid polypeptide reads, in one-letter code: Dephospho-CoA kinase (194 aa).

The 191-residue stretch at Ala4–Thr194 folds into the DPCK domain. Gly12–Thr17 serves as a coordination point for ATP.

This sequence belongs to the CoaE family.

The protein resides in the cytoplasm. The enzyme catalyses 3'-dephospho-CoA + ATP = ADP + CoA + H(+). Its pathway is cofactor biosynthesis; coenzyme A biosynthesis; CoA from (R)-pantothenate: step 5/5. In terms of biological role, catalyzes the phosphorylation of the 3'-hydroxyl group of dephosphocoenzyme A to form coenzyme A. This Jannaschia sp. (strain CCS1) protein is Dephospho-CoA kinase.